The primary structure comprises 163 residues: C-type lectin lectoxin-Lio1 (163 aa).

The N-terminal stretch at 1 to 21 (MERFIFAALLVVALSLSGTGA) is a signal peptide. Intrachain disulfides connect Cys-25–Cys-36, Cys-53–Cys-152, and Cys-127–Cys-144. Residues 32–153 (SDGYCYKVFK…CRSKRYFICK (122 aa)) enclose the C-type lectin domain. The Mannose-binding signature appears at 117–119 (EPN). Ca(2+) is bound by residues Glu-125 and Asp-141.

Belongs to the true venom lectin family. In terms of tissue distribution, expressed by the venom gland.

It localises to the secreted. In terms of biological role, mannose-binding lectin which recognizes specific carbohydrate structures and agglutinates a variety of animal cells by binding to cell-surface glycoproteins and glycolipids. May be a calcium-dependent lectin. This Erythrolamprus poecilogyrus (Water snake) protein is C-type lectin lectoxin-Lio1.